We begin with the raw amino-acid sequence, 464 residues long: Protein FAM90A20 (464 aa).

6 disordered regions span residues 16–42 (RAQT…DPRL), 71–213 (ATLG…IPRP), 228–247 (PTHS…ASKT), 254–273 (VRTQ…CPSA), 309–389 (RLGP…HDGA), and 418–437 (EKPG…SEAP). 2 stretches are compositionally biased toward basic and acidic residues: residues 74–83 (GKKEGKENLK) and 97–114 (NKDK…DPQR). The span at 180–197 (LASLSPLRKASLSSSSSL) shows a compositional bias: low complexity.

Belongs to the FAM90 family.

In Homo sapiens (Human), this protein is Protein FAM90A20.